The following is a 302-amino-acid chain: Acetaldehyde dehydrogenase 1 (302 aa).

12-15 (SGNI) provides a ligand contact to NAD(+). Catalysis depends on Cys-127, which acts as the Acyl-thioester intermediate. NAD(+) contacts are provided by residues 158–166 (SAGPGTRAN) and Asn-277.

It belongs to the acetaldehyde dehydrogenase family.

The catalysed reaction is acetaldehyde + NAD(+) + CoA = acetyl-CoA + NADH + H(+). This Mycobacteroides abscessus (strain ATCC 19977 / DSM 44196 / CCUG 20993 / CIP 104536 / JCM 13569 / NCTC 13031 / TMC 1543 / L948) (Mycobacterium abscessus) protein is Acetaldehyde dehydrogenase 1.